The primary structure comprises 208 residues: Uracil phosphoribosyltransferase (208 aa).

Residues Arg-78, Arg-103, and 130-138 each bind 5-phospho-alpha-D-ribose 1-diphosphate; that span reads DPMLATGGS. Uracil contacts are provided by residues Ile-193 and 198–200; that span reads GDA. Asp-199 contributes to the 5-phospho-alpha-D-ribose 1-diphosphate binding site.

The protein belongs to the UPRTase family. Requires Mg(2+) as cofactor.

The catalysed reaction is UMP + diphosphate = 5-phospho-alpha-D-ribose 1-diphosphate + uracil. The protein operates within pyrimidine metabolism; UMP biosynthesis via salvage pathway; UMP from uracil: step 1/1. Its activity is regulated as follows. Allosterically activated by GTP. Catalyzes the conversion of uracil and 5-phospho-alpha-D-ribose 1-diphosphate (PRPP) to UMP and diphosphate. This is Uracil phosphoribosyltransferase from Shewanella denitrificans (strain OS217 / ATCC BAA-1090 / DSM 15013).